Reading from the N-terminus, the 385-residue chain is NADH-ubiquinone oxidoreductase chain 2 (385 aa).

A run of 10 helical transmembrane segments spans residues 12 to 32 (PVLV…SNWL), 34 to 50 (VYLA…ILVA), 66 to 86 (FVLG…LCGL), 112 to 132 (VITP…LSAA), 161 to 181 (VFSI…ATIF), 200 to 220 (LAYS…IGTF), 227 to 247 (LIYM…VLAL), 268 to 288 (AITL…IGFF), 291 to 311 (WWIL…LAVI), and 354 to 374 (LLIG…NLLL).

The protein belongs to the complex I subunit 2 family.

The protein localises to the mitochondrion inner membrane. It catalyses the reaction a ubiquinone + NADH + 5 H(+)(in) = a ubiquinol + NAD(+) + 4 H(+)(out). Core subunit of the mitochondrial membrane respiratory chain NADH dehydrogenase (Complex I) that is believed to belong to the minimal assembly required for catalysis. Complex I functions in the transfer of electrons from NADH to the respiratory chain. The immediate electron acceptor for the enzyme is believed to be ubiquinone. This Metridium senile (Brown sea anemone) protein is NADH-ubiquinone oxidoreductase chain 2 (ND2).